The following is a 209-amino-acid chain: Mei4-dependent protein 1 (209 aa).

The N-terminal stretch at 1 to 22 (MLHATQLCYLLLFCFLPISISS) is a signal peptide.

Its subcellular location is the secreted. The polypeptide is Mei4-dependent protein 1 (mde1) (Schizosaccharomyces pombe (strain 972 / ATCC 24843) (Fission yeast)).